A 502-amino-acid polypeptide reads, in one-letter code: Tyrosine-protein kinase receptor old-1 (502 aa).

The N-terminal stretch at 1–19 is a signal peptide; that stretch reads MKGTLIFVVFYSSYGFAHC. Residues 20–58 lie on the Extracellular side of the membrane; it reads NTILRSSSLSRNFEDSLRRIPRSTDKDETGFEDSNVQEV. The helical transmembrane segment at 59–79 threads the bilayer; sequence IFILLYCLFVALAILICGLII. At 80 to 502 the chain is on the cytoplasmic side; that stretch reads FYNSRKRELR…WLSDEKHCDS (423 aa). A disordered region spans residues 99-140; it reads LLEPTSADHKRRNSSNIVPPEPTPYPITSGESDLRQTPSRLS. The segment covering 127 to 140 has biased composition (polar residues); sequence SGESDLRQTPSRLS. The Protein kinase domain occupies 175–473; it reads ISKGRPLGSG…ELKTTSNEYF (299 aa). Residues 181–189 and lysine 213 contribute to the ATP site; that span reads LGSGEFGII. The active-site Proton acceptor is aspartate 321.

Belongs to the protein kinase superfamily. Tyr protein kinase family.

It is found in the cell membrane. It carries out the reaction L-tyrosyl-[protein] + ATP = O-phospho-L-tyrosyl-[protein] + ADP + H(+). Receptor tyrosine kinase which plays a role in promoting longevity and resistance to stresses including UV irradiation and high temperatures, probably downstream of daf-16. This chain is Tyrosine-protein kinase receptor old-1, found in Caenorhabditis elegans.